The following is a 437-amino-acid chain: GTPase Obg (437 aa).

Positions 2–160 (SMFLDTAKVS…RQLELELKIL (159 aa)) constitute an Obg domain. Positions 161-338 (ADVGLVGFPS…LLEATAELLA (178 aa)) constitute an OBG-type G domain. Residues 167 to 174 (GFPSVGKS), 192 to 196 (FTTIV), 214 to 217 (DLPG), 284 to 287 (NKMD), and 319 to 321 (SSL) contribute to the GTP site. Mg(2+) contacts are provided by Ser-174 and Thr-194. The OCT domain maps to 359–437 (GFAAEEKAFE…IGKFEFEFVD (79 aa)).

It belongs to the TRAFAC class OBG-HflX-like GTPase superfamily. OBG GTPase family. In terms of assembly, monomer. Requires Mg(2+) as cofactor.

The protein resides in the cytoplasm. Functionally, an essential GTPase which binds GTP, GDP and possibly (p)ppGpp with moderate affinity, with high nucleotide exchange rates and a fairly low GTP hydrolysis rate. Plays a role in control of the cell cycle, stress response, ribosome biogenesis and in those bacteria that undergo differentiation, in morphogenesis control. The chain is GTPase Obg from Streptococcus equi subsp. equi (strain 4047).